The primary structure comprises 339 residues: GTPase Obg (339 aa).

The Obg domain maps to Met1 to Leu159. The disordered stretch occupies residues Asn127–Gly147. An OBG-type G domain is found at Ala160 to Glu333. GTP-binding positions include Gly166–Ser173, Phe191–Tyr195, Asp213–Gly216, Asn283–Asp286, and Ser314–Ile316. Mg(2+) contacts are provided by Ser173 and Thr193.

The protein belongs to the TRAFAC class OBG-HflX-like GTPase superfamily. OBG GTPase family. In terms of assembly, monomer. It depends on Mg(2+) as a cofactor.

It is found in the cytoplasm. Its function is as follows. An essential GTPase which binds GTP, GDP and possibly (p)ppGpp with moderate affinity, with high nucleotide exchange rates and a fairly low GTP hydrolysis rate. Plays a role in control of the cell cycle, stress response, ribosome biogenesis and in those bacteria that undergo differentiation, in morphogenesis control. This chain is GTPase Obg, found in Coxiella burnetii (strain CbuK_Q154) (Coxiella burnetii (strain Q154)).